The primary structure comprises 301 residues: POU domain, class 6, transcription factor 1 (301 aa).

2 tandem repeats follow at residues 11–17 (NAQGQVI) and 50–56 (NAQGQVI). The interval 11-56 (NAQGQVIGALPWVVNSASVATPAPAQSLQVQAVTPQLLLNAQGQVI) is 2 X 7 AA repeats of N-A-Q-G-Q-V-I. Residues 66–88 (QPVAVRKPSTPESPAKSEVQPIQ) form a disordered region. Positions 139-213 (EDGINLEEIR…VLEKWLNEAE (75 aa)) constitute a POU-specific domain. The homeobox DNA-binding region spans 234 to 293 (KRKRRTSFTPQAIEALNAYFEKNPLPTGQEITEIAKELNYDREVVRVWFCNRRQTLKNTS).

It belongs to the POU transcription factor family. Class-6 subfamily. In the embryo, widely expressed, with highest levels in the developing brain and spinal cord. In the adult, mostly found in the brain, where it is diffusely expressed with the exception of an enrichment in layer IV of the neocortex. Also found in kidney, lung, heart, adrenal, skin, and placenta. Low levels in spleen, muscle, liver, anterior pituitary, testis and ovary.

It localises to the nucleus. In terms of biological role, transcription factor that binds preferentially to a variant of the octamer motif (5'-ATGATAAT-3'). This is POU domain, class 6, transcription factor 1 (Pou6f1) from Rattus norvegicus (Rat).